The chain runs to 242 residues: Glucosamine-6-phosphate deaminase (242 aa).

Asp67 (proton acceptor; for enolization step) is an active-site residue. The active-site For ring-opening step is the Asn137. His139 functions as the Proton acceptor; for ring-opening step in the catalytic mechanism. Catalysis depends on Glu144, which acts as the For ring-opening step.

This sequence belongs to the glucosamine/galactosamine-6-phosphate isomerase family. NagB subfamily.

It catalyses the reaction alpha-D-glucosamine 6-phosphate + H2O = beta-D-fructose 6-phosphate + NH4(+). Its pathway is amino-sugar metabolism; N-acetylneuraminate degradation; D-fructose 6-phosphate from N-acetylneuraminate: step 5/5. In terms of biological role, catalyzes the reversible isomerization-deamination of glucosamine 6-phosphate (GlcN6P) to form fructose 6-phosphate (Fru6P) and ammonium ion. The sequence is that of Glucosamine-6-phosphate deaminase from Staphylococcus saprophyticus subsp. saprophyticus (strain ATCC 15305 / DSM 20229 / NCIMB 8711 / NCTC 7292 / S-41).